A 605-amino-acid chain; its full sequence is DNA mismatch repair protein MutL (605 aa).

The protein belongs to the DNA mismatch repair MutL/HexB family.

Functionally, this protein is involved in the repair of mismatches in DNA. It is required for dam-dependent methyl-directed DNA mismatch repair. May act as a 'molecular matchmaker', a protein that promotes the formation of a stable complex between two or more DNA-binding proteins in an ATP-dependent manner without itself being part of a final effector complex. The polypeptide is DNA mismatch repair protein MutL (Methylocella silvestris (strain DSM 15510 / CIP 108128 / LMG 27833 / NCIMB 13906 / BL2)).